Here is a 209-residue protein sequence, read N- to C-terminus: Probable nicotinate-nucleotide adenylyltransferase (209 aa).

The protein belongs to the NadD family.

The catalysed reaction is nicotinate beta-D-ribonucleotide + ATP + H(+) = deamido-NAD(+) + diphosphate. It participates in cofactor biosynthesis; NAD(+) biosynthesis; deamido-NAD(+) from nicotinate D-ribonucleotide: step 1/1. Its function is as follows. Catalyzes the reversible adenylation of nicotinate mononucleotide (NaMN) to nicotinic acid adenine dinucleotide (NaAD). This is Probable nicotinate-nucleotide adenylyltransferase from Idiomarina loihiensis (strain ATCC BAA-735 / DSM 15497 / L2-TR).